The following is a 659-amino-acid chain: Exoribonuclease 2 (659 aa).

Positions 189 to 531 (RKDLTALHFV…NHRLIKACIA (343 aa)) constitute an RNB domain. Residues 576–658 (KPEFQAEVQD…ETRSLIGNLV (83 aa)) enclose the S1 motif domain.

This sequence belongs to the RNR ribonuclease family. RNase II subfamily.

Its subcellular location is the cytoplasm. The enzyme catalyses Exonucleolytic cleavage in the 3'- to 5'-direction to yield nucleoside 5'-phosphates.. Involved in mRNA degradation. Hydrolyzes single-stranded polyribonucleotides processively in the 3' to 5' direction. This chain is Exoribonuclease 2, found in Actinobacillus succinogenes (strain ATCC 55618 / DSM 22257 / CCUG 43843 / 130Z).